The primary structure comprises 406 residues: 12S rRNA N(4)-cytidine methyltransferase METTL15 (406 aa).

The transit peptide at 1 to 22 (MLRYPYFYRTYNRLFSHFVDSG) directs the protein to the mitochondrion. S-adenosyl-L-methionine-binding positions include 100 to 102 (GGH), Asp-119, Phe-146, Asp-169, and Gln-176. At Ser-358 the chain carries Phosphoserine.

Belongs to the methyltransferase superfamily. RsmH family.

It is found in the mitochondrion matrix. It catalyses the reaction cytidine(839) in 12S rRNA + S-adenosyl-L-methionine = N(4)-methylcytidine(839) in 12S rRNA + S-adenosyl-L-homocysteine + H(+). Its function is as follows. N4-methylcytidine (m4C) methyltransferase responsible for the methylation of position C839 in mitochondrial 12S rRNA. Involved in the stabilization of 12S rRNA folding, therefore facilitating the assembly of the mitochondrial small ribosomal subunits. In Mus musculus (Mouse), this protein is 12S rRNA N(4)-cytidine methyltransferase METTL15.